A 220-amino-acid chain; its full sequence is Elongation factor Ts, chloroplastic (220 aa).

The protein belongs to the EF-Ts family.

The protein resides in the plastid. The protein localises to the chloroplast. In terms of biological role, associates with the EF-Tu.GDP complex and induces the exchange of GDP to GTP. It remains bound to the aminoacyl-tRNA.EF-Tu.GTP complex up to the GTP hydrolysis stage on the ribosome. The protein is Elongation factor Ts, chloroplastic (tsf) of Porphyra purpurea (Red seaweed).